Consider the following 304-residue polypeptide: UTP--glucose-1-phosphate uridylyltransferase 1 (304 aa).

It belongs to the UDPGP type 2 family.

It carries out the reaction alpha-D-glucose 1-phosphate + UTP + H(+) = UDP-alpha-D-glucose + diphosphate. The protein operates within carbohydrate metabolism; nucleotide-sugar metabolism. This chain is UTP--glucose-1-phosphate uridylyltransferase 1 (hasC1), found in Streptococcus pyogenes serotype M1.